The primary structure comprises 1148 residues: Envelopment polyprotein (1148 aa).

A signal peptide spans 1–23 (MGELSPVCLYLLLQGLLLCNTGA). Over 24–495 (ARNLNELKME…VPGLHGWATM (472 aa)) the chain is Lumenal. Disulfide bonds link cysteine 34–cysteine 159, cysteine 68–cysteine 165, cysteine 117–cysteine 136, cysteine 141–cysteine 146, cysteine 183–cysteine 193, and cysteine 218–cysteine 257. Asparagine 142 carries an N-linked (GlcNAc...) asparagine; by host glycan. N-linked (GlcNAc...) asparagine; by host glycosylation is present at asparagine 357. 4 disulfides stabilise this stretch: cysteine 386/cysteine 445, cysteine 390/cysteine 399, cysteine 415/cysteine 434, and cysteine 462/cysteine 485. Asparagine 409 carries an N-linked (GlcNAc...) asparagine; by host glycan. Residues 496–516 (LLLLTLCFGWVLIPTITMILL) traverse the membrane as a helical segment. Over 517–637 (KILIAFAYLC…LSLFRYRSRF (121 aa)) the chain is Cytoplasmic. The tract at residues 526 to 543 (CSKYNTDSKFRILIEKVK) is binding to the ribonucleoprotein. CCHC-type zinc fingers lie at residues 555-575 (CEVC…RKSC) and 580-601 (CPYC…FKVC). 3 binding to the ribonucleoprotein regions span residues 598–615 (FKVC…RKSL), 602–613 (KLTSRFQENLRK), and 621–635 (MQGC…RYRS). The 24-residue stretch at 621 to 644 (MQGCYRTLSLFRYRSRFFVGLVWC) folds into the ITAM domain. The short motif at 625–628 (YRTL) is the YxxL element. The chain crosses the membrane as a helical span at residues 638–658 (FVGLVWCVLLVLELIVWAASA). Residues 659 to 1114 (ETQNLNAGWT…EWILGVLNGN (456 aa)) are Lumenal-facing. 8 cysteine pairs are disulfide-bonded: cysteine 745-cysteine 780, cysteine 749-cysteine 787, cysteine 761-cysteine 894, cysteine 775-cysteine 905, cysteine 790-cysteine 913, cysteine 816-cysteine 825, cysteine 833-cysteine 842, and cysteine 873-cysteine 877. Residues 767–787 (YEYETGWGCNPPDCPGVGTGC) form a fusion loop region. Asparagine 937 is a glycosylation site (N-linked (GlcNAc...) asparagine; by host). 5 disulfides stabilise this stretch: cysteine 979–cysteine 1009, cysteine 1002–cysteine 1054, cysteine 1019–cysteine 1024, cysteine 1055–cysteine 1060, and cysteine 1094–cysteine 1098. A helical transmembrane segment spans residues 1115–1135 (WMVVAVLVVLLILSILLFTLC). Binding to the ribonucleoprotein stretches follow at residues 1131-1143 (LFTL…PSYR) and 1131-1148 (LFTL…EHKP). At 1136 to 1148 (CPRRPSYRKEHKP) the chain is on the cytoplasmic side.

It belongs to the hantavirus envelope glycoprotein family. Homodimer. Homotetramer; forms heterotetrameric Gn-Gc spikes in the pre-fusion conformation. Interacts (via C-terminus) with the nucleoprotein. Interacts with host TUFM; this interaction contributes to the virus-induced degradation of mitochondria by autophagy, which leads to degradation of host MAVS and inhibition of type I interferon (IFN) responses. Interacts with host MAP1LC3B; this interaction contributes to the virus-induced degradation of mitochondria by autophagy, which leads to degradation of host MAVS and inhibition of type I interferon (IFN) responses. In terms of assembly, homodimer. Homotetramer; forms heterotetrameric Gn-Gc spikes in the pre-fusion conformation. Homotrimer; forms homotrimer in the post-fusion conformation at acidic pH. Interacts (via C-terminus) with the nucleoprotein. In terms of processing, envelope polyprotein precursor is quickly cleaved in vivo just after synthesis, presumably by host signal peptidase.

The protein resides in the virion membrane. The protein localises to the host cell surface. Its subcellular location is the host Golgi apparatus membrane. It is found in the host endoplasmic reticulum membrane. It localises to the host mitochondrion. Forms homotetramers with glycoprotein C at the surface of the virion. Attaches the virion to host cell receptors including integrin ITGAV/ITGB3. This attachment induces virion internalization predominantly through clathrin-dependent endocytosis. Mediates the assembly and budding of infectious virus particles through its interaction with the nucleocapsid protein and the viral genome. May dysregulate normal immune and endothelial cell responses through an ITAM motif. Translocates to mitochondria, binds to host TUFM and recruits MAP1LC3B. These interactions induce mitochondrial autophagy and therefore destruction of host MAVS leading to inhibition of type I interferon (IFN) responses. Concomitant breakdown of glycoprotein N is apparently prevented by the nucleoprotein that may inhibit Gn-stimulated autophagosome-lysosome fusion. Interacts with the viral genomic RNA. Its function is as follows. Forms homotetramers with glycoprotein N at the surface of the virion. Attaches the virion to host cell receptors including integrin ITGAV/ITGB3. This attachment induces virion internalization predominantly through clathrin-dependent endocytosis. Class II fusion protein that promotes fusion of viral membrane with host endosomal membrane after endocytosis of the virion. The chain is Envelopment polyprotein (GP) from Puumala virus (strain K27).